Here is a 35-residue protein sequence, read N- to C-terminus: Photosystem II reaction center protein Psb30 (35 aa).

Residues 6–26 (VIVQLVFLALIITTGPVIIVY) traverse the membrane as a helical segment.

This sequence belongs to the Psb30/Ycf12 family. PSII is composed of 1 copy each of membrane proteins PsbA, PsbB, PsbC, PsbD, PsbE, PsbF, PsbH, PsbI, PsbJ, PsbK, PsbL, PsbM, PsbT, PsbY, PsbZ, Psb30/Ycf12, peripheral proteins of the oxygen-evolving complex and a large number of cofactors. It forms dimeric complexes.

It is found in the plastid. The protein localises to the chloroplast thylakoid membrane. In terms of biological role, a core subunit of photosystem II (PSII), probably helps stabilize the reaction center. In Cyanidium caldarium (Red alga), this protein is Photosystem II reaction center protein Psb30.